We begin with the raw amino-acid sequence, 461 residues long: Tumor necrosis factor receptor superfamily member 1A (461 aa).

A signal peptide spans 1 to 29 (MGLPIVPGLLLSLVLLALLMGIHPSGVTG). The Extracellular portion of the chain corresponds to 30–211 (LVPSLGDREK…VTNPQDSGTA (182 aa)). TNFR-Cys repeat units follow at residues 43–82 (LCPQ…TVCE), 83–125 (VCDK…DTVC), 126–166 (GCKK…NTVC), and 167–196 (NCHA…KLCL). Disulfide bonds link Cys44-Cys58, Cys59-Cys72, Cys62-Cys81, Cys84-Cys99, Cys102-Cys117, Cys105-Cys125, Cys127-Cys143, Cys146-Cys158, Cys149-Cys166, Cys168-Cys179, Cys182-Cys195, and Cys185-Cys191. A glycan (N-linked (GlcNAc...) asparagine) is linked at Asn54. N-linked (GlcNAc...) asparagine glycosylation occurs at Asn151. Asn201 carries N-linked (GlcNAc...) asparagine glycosylation. A helical transmembrane segment spans residues 212–234 (VLLPLVIFLGLCLLFFICISLLC). Over 235-461 (RYPQWRPRVY…AHSSTTHLPR (227 aa)) the chain is Cytoplasmic. Residues 344–354 (VRKWEDVVAAQ) are N-SMase activation domain (NSD). A Death domain is found at 363-448 (PAMLYAVVDG…GCLENIRETL (86 aa)).

Binding of TNF to the extracellular domain leads to homotrimerization. The aggregated death domains provide a novel molecular interface that interacts specifically with the death domain of TRADD. Various TRADD-interacting proteins such as TRAFS, RIPK1 and possibly FADD, are recruited to the complex by their association with TRADD. This complex activates at least two distinct signaling cascades, apoptosis and NF-kappa-B signaling. Interacts with BAG4, BABAM2, FEM1B, GRB2, SQSTM1 and TRPC4AP. Interacts with DAB2IP. Interacts directly with NOL3 (via CARD domain); inhibits TNF-signaling pathway. Interacts with SH3RF2, TRADD and RIPK1. SH3RF2 facilitates the recruitment of RIPK1 and TRADD to TNFRSF1A in a TNF-alpha-dependent process. Interacts with PGLYRP1; this interaction is important for cell death induction. Interacts (via death domain) with MADD (via death domain).

Its subcellular location is the cell membrane. The protein resides in the golgi apparatus membrane. Receptor for TNFSF2/TNF-alpha and homotrimeric TNFSF1/lymphotoxin-alpha. The adapter molecule FADD recruits caspase-8 to the activated receptor. The resulting death-inducing signaling complex (DISC) performs caspase-8 proteolytic activation which initiates the subsequent cascade of caspases (aspartate-specific cysteine proteases) mediating apoptosis. In Rattus norvegicus (Rat), this protein is Tumor necrosis factor receptor superfamily member 1A (Tnfrsf1a).